A 504-amino-acid polypeptide reads, in one-letter code: Aspartyl/glutamyl-tRNA(Asn/Gln) amidotransferase subunit B (504 aa).

This sequence belongs to the GatB/GatE family. GatB subfamily. Heterotrimer of A, B and C subunits.

It catalyses the reaction L-glutamyl-tRNA(Gln) + L-glutamine + ATP + H2O = L-glutaminyl-tRNA(Gln) + L-glutamate + ADP + phosphate + H(+). The catalysed reaction is L-aspartyl-tRNA(Asn) + L-glutamine + ATP + H2O = L-asparaginyl-tRNA(Asn) + L-glutamate + ADP + phosphate + 2 H(+). Functionally, allows the formation of correctly charged Asn-tRNA(Asn) or Gln-tRNA(Gln) through the transamidation of misacylated Asp-tRNA(Asn) or Glu-tRNA(Gln) in organisms which lack either or both of asparaginyl-tRNA or glutaminyl-tRNA synthetases. The reaction takes place in the presence of glutamine and ATP through an activated phospho-Asp-tRNA(Asn) or phospho-Glu-tRNA(Gln). The protein is Aspartyl/glutamyl-tRNA(Asn/Gln) amidotransferase subunit B of Tropheryma whipplei (strain TW08/27) (Whipple's bacillus).